Consider the following 542-residue polypeptide: Tubby-related protein 1 (542 aa).

The segment at 1–289 is disordered; the sequence is MPLRDETLRE…RAPSPPVEVD (289 aa). Basic and acidic residues predominate over residues 91–104; it reads FLRDPEAKKRDPRE. Acidic residues predominate over residues 114-132; it reads AEDEEEEEEEDEEDEEEEA. Over residues 146 to 157 the composition is skewed to basic and acidic residues; it reads PLREKSSADLKE. Residues 262–275 are compositionally biased toward basic residues; that stretch reads SNQKGKAKGKGKKK.

This sequence belongs to the TUB family. Homodimer. May interact with ABCF1, PSIP1, ZEB1 and HMGB2 (Potential). Interacts with DNM1. Interacts with F-actin. Interacts with TUB. Interacts with TYRO3. As to expression, retina-specific.

It is found in the cytoplasm. The protein localises to the cell membrane. Its subcellular location is the secreted. It localises to the synapse. Its function is as follows. Required for normal development of photoreceptor synapses. Required for normal photoreceptor function and for long-term survival of photoreceptor cells. Interacts with cytoskeleton proteins and may play a role in protein transport in photoreceptor cells. Binds lipids, especially phosphatidylinositol 3-phosphate, phosphatidylinositol 4-phosphate, phosphatidylinositol 5-phosphate, phosphatidylinositol 3,4-bisphosphate, phosphatidylinositol 4,5-bisphosphate, phosphatidylinositol 3,4,5-bisphosphate, phosphatidylserine and phosphatidic acid (in vitro). Contribute to stimulation of phagocytosis of apoptotic retinal pigment epithelium (RPE) cells and macrophages. The polypeptide is Tubby-related protein 1 (TULP1) (Homo sapiens (Human)).